The sequence spans 861 residues: Probable beta-glucosidase A (861 aa).

A signal peptide spans 1 to 19; the sequence is MKLGWIEVAALAAASVVSA. 3 N-linked (GlcNAc...) asparagine glycosylation sites follow: Asn62, Asn212, and Asn253. Asp281 is a catalytic residue. 9 N-linked (GlcNAc...) asparagine glycosylation sites follow: Asn316, Asn323, Asn355, Asn443, Asn524, Asn543, Asn565, Asn669, and Asn713. Positions 730–754 are disordered; that stretch reads DSKYIPEGATDGSAQPRLPASGGAG. Asn846 carries an N-linked (GlcNAc...) asparagine glycan.

Belongs to the glycosyl hydrolase 3 family.

The protein resides in the secreted. The catalysed reaction is Hydrolysis of terminal, non-reducing beta-D-glucosyl residues with release of beta-D-glucose.. The protein operates within glycan metabolism; cellulose degradation. Beta-glucosidases are one of a number of cellulolytic enzymes involved in the degradation of cellulosic biomass. Catalyzes the last step releasing glucose from the inhibitory cellobiose. This Aspergillus oryzae (strain ATCC 42149 / RIB 40) (Yellow koji mold) protein is Probable beta-glucosidase A (bglA).